We begin with the raw amino-acid sequence, 329 residues long: Glycerol-3-phosphate dehydrogenase [NAD(P)+] (329 aa).

NADPH is bound by residues Ser-10, Trp-11, Arg-31, and Lys-105. Sn-glycerol 3-phosphate contacts are provided by Lys-105, Gly-134, and Ser-136. Residue Ala-138 participates in NADPH binding. 5 residues coordinate sn-glycerol 3-phosphate: Lys-189, Asp-242, Ser-252, Arg-253, and Asn-254. The Proton acceptor role is filled by Lys-189. Residue Arg-253 coordinates NADPH. 2 residues coordinate NADPH: Val-277 and Glu-279.

This sequence belongs to the NAD-dependent glycerol-3-phosphate dehydrogenase family.

Its subcellular location is the cytoplasm. The enzyme catalyses sn-glycerol 3-phosphate + NAD(+) = dihydroxyacetone phosphate + NADH + H(+). It carries out the reaction sn-glycerol 3-phosphate + NADP(+) = dihydroxyacetone phosphate + NADPH + H(+). The protein operates within membrane lipid metabolism; glycerophospholipid metabolism. Catalyzes the reduction of the glycolytic intermediate dihydroxyacetone phosphate (DHAP) to sn-glycerol 3-phosphate (G3P), the key precursor for phospholipid synthesis. The chain is Glycerol-3-phosphate dehydrogenase [NAD(P)+] from Neisseria gonorrhoeae (strain ATCC 700825 / FA 1090).